The following is a 300-amino-acid chain: Putative zinc finger protein 705EP (300 aa).

One can recognise a KRAB domain in the interval 7–78 (VTFEDVAIDF…GREFLQDQNP (72 aa)). The C2H2-type 1; degenerate zinc-finger motif lies at 172-194 (YQCNLCEKAYTNCFHLRRPKMTH). C2H2-type zinc fingers lie at residues 200-222 (YTCH…EKTH) and 228-250 (YKCH…ERTH). A C2H2-type 4; degenerate zinc finger spans residues 256–278 (YECDNSGKAFSQSSGFRGNKIIH).

Belongs to the krueppel C2H2-type zinc-finger protein family.

It is found in the nucleus. May be involved in transcriptional regulation. In Homo sapiens (Human), this protein is Putative zinc finger protein 705EP.